Consider the following 237-residue polypeptide: MRLRVDVIPGEHLAYPDVVLVVDVIRATTTAAAFLEAGAEALYWTPSLESALAFKDEDVVLAGETGGLKPPRFDLGNSPREALSAQVAGRVVVMSTTNGTKAAHAAARTAKHVLLASLYNAHAAARLARELATEEVAILCAGKEGRAGLDDLYTAGVLAEYLGFLGEVEPEDGARVALAVKRAYPDPLEALSLSAAALALKQVGLEADVPFCAQVAKSAAVPVLRGRVGEALIFKRA.

This sequence belongs to the ComB family. Requires Mg(2+) as cofactor.

The catalysed reaction is (2R)-O-phospho-3-sulfolactate + H2O = (2R)-3-sulfolactate + phosphate. This is Probable 2-phosphosulfolactate phosphatase from Thermus thermophilus (strain ATCC 27634 / DSM 579 / HB8).